A 624-amino-acid chain; its full sequence is Kelch-like ECH-associated protein 1 (624 aa).

Residues 1 to 27 (MQPEPRPSGAGAHTQFLPLRSQRPEGA) form a disordered region. Residue Cys-38 is modified to S-(2-succinyl)cysteine. One can recognise a BTB domain in the interval 77-149 (CDVTLQVKYE…AYTASISMGE (73 aa)). Arg-135 participates in a covalent cross-link: N5-[4-(S-L-cysteinyl)-5-methyl-1H-imidazol-2-yl]-L-ornithine (Arg-Cys) (interchain with C-151 in KEAP1). Cys-151 and Cys-241 each carry S-(2-succinyl)cysteine. Cys-151 is modified (S-(2,3-dicarboxypropyl)cysteine; alternate). S-nitrosocysteine; alternate is present on Cys-151. An N5-[4-(S-L-cysteinyl)-5-methyl-1H-imidazol-2-yl]-L-ornithine (Cys-Arg) (interchain with R-135 in KEAP1) cross-link involves residue Cys-151. Residues 184–286 (AIGIANFAEQ…TPHFLQMQLQ (103 aa)) enclose the BACK domain. S-(2,3-dicarboxypropyl)cysteine is present on residues Cys-257 and Cys-273. Residues Cys-288 and Cys-319 each carry the S-(2-succinyl)cysteine modification. Cys-288 is subject to S-(2,3-dicarboxypropyl)cysteine; alternate. Kelch repeat units lie at residues 327 to 372 (LIYT…VVGG), 373 to 423 (LLYA…VIDG), 424 to 470 (HIYA…VLNR), 471 to 517 (LLYA…VLHN), 519 to 564 (IYAA…VHQG), and 565 to 611 (RIYV…VTME). Position 434 is an S-cGMP-cysteine (Cys-434). S-(2-succinyl)cysteine is present on Cys-613.

Belongs to the KEAP1 family. As to quaternary structure, component of the BCR(KEAP1) E3 ubiquitin ligase complex, at least composed of 2 molecules of CUL3, 2 molecules of KEAP1, and RBX1. Interacts with NFE2L2/NRF2; the interaction is direct. Forms a ternary complex with NFE2L2/NRF2 and PGAM5. Interacts with (phosphorylated) SQSTM1/p62; the interaction is direct and inactivates the BCR(KEAP1) complex by sequestering it in inclusion bodies, promoting its degradation. Interacts with NFE2L1. Interacts with BPTF and PTMA. Interacts with MAP1LC3B. Interacts indirectly with ENC1. Interacts with SESN1 and SESN2. Interacts with HSP90AA1 and HSP90AB1. Interacts with PGCKA1; this interaction prevents the ubiquitination of KEAP1 by TRIM25, thus protecting KEAP1 protein from degradation. In terms of processing, non-enzymatic covalent modifications of reactive cysteines by electrophile metabolites inactivate the BCR(KEAP1) complex. Accumulation of fumarate promotes the formation of cysteine S-succination (S-(2-succinyl)cysteine), leading to inactivate the BCR(KEAP1) complex and promote NFE2L2/NRF2 nuclear accumulation and activation. Nitric oxide-dependent 8-Nitro-cGMP formation promotes cysteine guanylation (S-cGMP-cysteine), leading to NFE2L2/NRF2 nuclear accumulation and activation. Itaconate, an anti-inflammatory metabolite generated in response to lipopolysaccharide, alkylates cysteines, activating NFE2L2/NRF2. Methylglyoxal, a reactive metabolite that accumulates when the glycolytic enzyme PGK1 is inhibited, promotes formation of a methylimidazole cross-link between proximal Cys-151 and Arg-135 on another KEAP1 molecule, resulting in an inactive dimer that inactivates the BCR(KEAP1) complex. Post-translationally, degraded via a proteasomal-independent process during selective autophagy: interaction with phosphorylated SQSTM1/p62 sequesters KEAP1 in inclusion bodies, leading to its degradation. Auto-ubiquitinated by the BCR(KEAP1) complex. Quinone-induced oxidative stress, but not sulforaphane, increases its ubiquitination. Ubiquitination and subsequent degradation is most pronounced following prolonged exposure of cells to oxidative stress, particularly in glutathione-deficient cells that are highly susceptible to oxidative stress. Deubiquitinated by USP25; leading to stabilization. Ubiquitinated by TRIM25; leading to degradation upon ER stress.

It localises to the cytoplasm. Its subcellular location is the nucleus. It participates in protein modification; protein ubiquitination. Ubiquitin ligase activity of the BCR(KEAP1) complex is inhibited by oxidative stress and electrophile metabolites such as sulforaphane. Electrophile metabolites react with reactive cysteine residues in KEAP1 and trigger non-enzymatic covalent modifications of these cysteine residues, leading to inactivate the ubiquitin ligase activity of the BCR(KEAP1) complex. Selective autophagy also inactivates the BCR(KEAP1) complex via interaction between KEAP1 and SQSTM1/p62, which sequesters the complex in inclusion bodies and promotes its degradation. Substrate-specific adapter of a BCR (BTB-CUL3-RBX1) E3 ubiquitin ligase complex that regulates the response to oxidative stress by targeting NFE2L2/NRF2 for ubiquitination. KEAP1 acts as a key sensor of oxidative and electrophilic stress: in normal conditions, the BCR(KEAP1) complex mediates ubiquitination and degradation of NFE2L2/NRF2, a transcription factor regulating expression of many cytoprotective genes. In response to oxidative stress, different electrophile metabolites trigger non-enzymatic covalent modifications of highly reactive cysteine residues in KEAP1, leading to inactivate the ubiquitin ligase activity of the BCR(KEAP1) complex, promoting NFE2L2/NRF2 nuclear accumulation and expression of phase II detoxifying enzymes. In response to selective autophagy, KEAP1 is sequestered in inclusion bodies following its interaction with SQSTM1/p62, leading to inactivation of the BCR(KEAP1) complex and activation of NFE2L2/NRF2. The BCR(KEAP1) complex also mediates ubiquitination of SQSTM1/p62, increasing SQSTM1/p62 sequestering activity and degradation. The BCR(KEAP1) complex also targets BPTF and PGAM5 for ubiquitination and degradation by the proteasome. The protein is Kelch-like ECH-associated protein 1 of Sus scrofa (Pig).